A 438-amino-acid chain; its full sequence is Serine hydroxymethyltransferase (438 aa).

(6S)-5,6,7,8-tetrahydrofolate-binding positions include Leu-135 and 139 to 141 (GHL). The residue at position 244 (Lys-244) is an N6-(pyridoxal phosphate)lysine. Residues 361-383 (GVPNDPLPPVKTSGIRVGSPAGT) are disordered.

It belongs to the SHMT family. Homodimer. Pyridoxal 5'-phosphate serves as cofactor.

The protein localises to the cytoplasm. The enzyme catalyses (6R)-5,10-methylene-5,6,7,8-tetrahydrofolate + glycine + H2O = (6S)-5,6,7,8-tetrahydrofolate + L-serine. Its pathway is one-carbon metabolism; tetrahydrofolate interconversion. It functions in the pathway amino-acid biosynthesis; glycine biosynthesis; glycine from L-serine: step 1/1. Catalyzes the reversible interconversion of serine and glycine with tetrahydrofolate (THF) serving as the one-carbon carrier. This reaction serves as the major source of one-carbon groups required for the biosynthesis of purines, thymidylate, methionine, and other important biomolecules. Also exhibits THF-independent aldolase activity toward beta-hydroxyamino acids, producing glycine and aldehydes, via a retro-aldol mechanism. This chain is Serine hydroxymethyltransferase, found in Rhizorhabdus wittichii (strain DSM 6014 / CCUG 31198 / JCM 15750 / NBRC 105917 / EY 4224 / RW1) (Sphingomonas wittichii).